Consider the following 295-residue polypeptide: Septu protein PtuB (295 aa).

In terms of biological role, component of antiviral defense system Septu type II, composed of PtuA and PtuB. Expression of Septu type II in B.subtilis (strain BEST7003) confers resistance to phages SBSphiC and SpBeta. May be a nuclease. This Bacillus mycoides (strain KBAB4) (Bacillus weihenstephanensis) protein is Septu protein PtuB.